Reading from the N-terminus, the 92-residue chain is uncharacterized protein (92 aa).

The region spanning 25–83 (LEEKLKQEKIDRKYLAQVTNIPYTTVSRIMRAEANREFNPEIDTILKIAKYFNCTMDEV) is the HTH cro/C1-type domain. The segment at residues 36-55 (RKYLAQVTNIPYTTVSRIMR) is a DNA-binding region (H-T-H motif).

This is an uncharacterized protein from Rickettsia prowazekii (strain Madrid E).